The chain runs to 1266 residues: Rho GTPase-activating protein 29 (1266 aa).

Phosphoserine is present on residues Ser171, Ser176, Ser179, and Ser190. In terms of domain architecture, F-BAR spans 192-462; it reads IELDNLLLKN…SAKLYDPGQE (271 aa). Residues 296 to 418 adopt a coiled-coil conformation; sequence RKNEMEKQRK…EILTQLRTLV (123 aa). Residues 482–501 are disordered; that stretch reads NVNKQMTNSPQTSGYEPADS. Over residues 483–495 the composition is skewed to polar residues; the sequence is VNKQMTNSPQTSG. Phosphoserine is present on residues Ser501, Ser521, and Ser554. Positions 542–561 are enriched in low complexity; that stretch reads DSESTGGSSESRSLDSESIS. The segment at 542-601 is disordered; the sequence is DSESTGGSSESRSLDSESISPGDFHRKLPRTPSSGTMSSADDLDEREPPSPSEAGPNSLG. The segment at 614–659 adopts a Phorbol-ester/DAG-type zinc-finger fold; it reads THKFRKLRSPTKCRDCDGIVMFPGVECEECLLVCHRKCLENLVIIC. The Rho-GAP domain maps to 673–888; it reads AEFIQVAKKE…FLITYSQKIF (216 aa). 3 positions are modified to phosphoserine: Ser920, Ser956, and Ser1028. Disordered regions lie at residues 1039–1081, 1116–1157, and 1209–1266; these read SSPT…KVNG, GLTV…ATAV, and KSDP…PQFV. The segment covering 1072–1081 has biased composition (polar residues); the sequence is SNTTRSKVNG. Positions 1124–1136 are enriched in basic and acidic residues; that stretch reads NRDHPGSKAHAEP. Ser1149 and Ser1151 each carry phosphoserine. Over residues 1256-1266 the composition is skewed to acidic residues; that stretch reads EDLEDEIPQFV. Residues 1263-1266 form an interaction with PTPN13/PTPL1 region; sequence PQFV.

Interacts with PTPN13/PTPL1. Interacts with RAP2A via its coiled coil domain. Interacts with RASIP1.

Functionally, GTPase activator for the Rho-type GTPases by converting them to an inactive GDP-bound state. Has strong activity toward RHOA, and weaker activity toward RAC1 and CDC42. May act as a specific effector of RAP2A to regulate Rho. In concert with RASIP1, suppresses RhoA signaling and dampens ROCK and MYH9 activities in endothelial cells and plays an essential role in blood vessel tubulogenesis. The protein is Rho GTPase-activating protein 29 (Arhgap29) of Mus musculus (Mouse).